Reading from the N-terminus, the 332-residue chain is Ribosomal RNA-processing protein 8 (332 aa).

The disordered stretch occupies residues 1–109; it reads MGKKRINEVS…EVEKKNEEGD (109 aa). 2 stretches are compositionally biased toward basic residues: residues 38–53 and 82–94; these read KKKK…KLAA and KKKK…KKKY. Positions 95-109 are enriched in basic and acidic residues; sequence KPEAAEVEKKNEEGD. S-adenosyl-L-methionine is bound by residues H158, G193, D213, D225, M226, and C242.

Belongs to the methyltransferase superfamily. RRP8 family.

It localises to the nucleus. The protein resides in the nucleolus. In terms of biological role, probable methyltransferase required to silence rDNA. In Caenorhabditis briggsae, this protein is Ribosomal RNA-processing protein 8 (rrp-8).